A 375-amino-acid polypeptide reads, in one-letter code: Paralyzed arrest at two-fold protein 6 (375 aa).

Residues Met1–Glu51 form a disordered region. Residues Pro10–Val20 are compositionally biased toward basic and acidic residues. 2 Calponin-homology (CH) domains span residues Ala99 to Arg206 and Ala266 to Lys373.

It belongs to the parvin family. As to quaternary structure, may interact (via calponin-homology (CH) 2 domain) with pat-4 (via kinase domain). May form a complex with unc-112 and pat-4. Component of an integrin containing attachment complex, composed of at least pat-2, pat-3, pat-4, pat-6, unc-52, unc-97 and unc-112. Expressed from 1.5 stage embryos, mostly within the muscle cells. In adult hermaphrodites, expressed in the attachments of other muscles, including the uterine, anal depressor, anal sphincter, and vulval muscles, as well as in the spermatheca and the distal tip cells. Expressed in mechanosensory receptor neurons ALML/R, PLML/R, AVM, and PVM. Localizes at body wall muscle attachments.

The protein resides in the cytoplasm. It localises to the cytoskeleton. The protein localises to the myofibril. Its subcellular location is the sarcomere. It is found in the m line. The protein resides in the perikaryon. It localises to the cell projection. The protein localises to the axon. Its function is as follows. Involved in the regulation of cell adhesion and cytoskeleton organization. Component of an integrin containing attachment complex, which is required for muscle development and maintenance. During embryonic development, required to recruit cpna-1, unc-89 and myofilaments to newly forming integrin attachments composed of integrins pat-2/pat-3, pat-4 and unc-112. Also required to reposition the integrin-based attachments so that they form the highly ordered array of dense body and M-line attachments that are characteristic of mature muscle cells. During the formation of neuromuscular junctions at the larval stage, negatively regulates membrane protrusion from body wall muscles. This is Paralyzed arrest at two-fold protein 6 from Caenorhabditis elegans.